The following is a 268-amino-acid chain: 4-hydroxy-tetrahydrodipicolinate reductase (268 aa).

7 to 12 (GANGRM) lines the NAD(+) pocket. Residue Arg-34 coordinates NADP(+). NAD(+) contacts are provided by residues 97-99 (GTT) and 121-124 (SENM). Catalysis depends on His-155, which acts as the Proton donor/acceptor. (S)-2,3,4,5-tetrahydrodipicolinate is bound at residue His-156. The active-site Proton donor is the Lys-159. 165–166 (GT) lines the (S)-2,3,4,5-tetrahydrodipicolinate pocket.

This sequence belongs to the DapB family.

It is found in the cytoplasm. It carries out the reaction (S)-2,3,4,5-tetrahydrodipicolinate + NAD(+) + H2O = (2S,4S)-4-hydroxy-2,3,4,5-tetrahydrodipicolinate + NADH + H(+). The catalysed reaction is (S)-2,3,4,5-tetrahydrodipicolinate + NADP(+) + H2O = (2S,4S)-4-hydroxy-2,3,4,5-tetrahydrodipicolinate + NADPH + H(+). The protein operates within amino-acid biosynthesis; L-lysine biosynthesis via DAP pathway; (S)-tetrahydrodipicolinate from L-aspartate: step 4/4. Functionally, catalyzes the conversion of 4-hydroxy-tetrahydrodipicolinate (HTPA) to tetrahydrodipicolinate. This is 4-hydroxy-tetrahydrodipicolinate reductase from Bartonella bacilliformis (strain ATCC 35685 / KC583 / Herrer 020/F12,63).